The primary structure comprises 283 residues: Short-chain dehydrogenase anuB (283 aa).

The NADP(+) site is built by threonine 57, aspartate 78, asparagine 106, tyrosine 166, lysine 170, valine 199, and threonine 201. The active-site Proton acceptor is the tyrosine 166. Residue tyrosine 166 is the Proton donor of the active site. The Lowers pKa of active site Tyr role is filled by lysine 170.

Belongs to the short-chain dehydrogenases/reductases (SDR) family.

It participates in secondary metabolite biosynthesis. Highly reducing polyketide synthase; part of the gene cluster that mediates the biosynthesis of annullatin D, an alkylated aromatic polyketide with a fused dihydrobenzofuran lactone ring system that exhibits potent agonistic activities toward the cannabinoid receptors. The annullatin backbone 2-hydroxymethyl-3-pentylphenol is assembled from one acetyl-CoA starter unit and 5 malonyl-CoA elongation units by cooperation of the highly reducing polyketide synthase anuA, the short-chain dehydrogenase anuB and the oxidoreductase anuC, before being hydroxylated at the C-5 alkyl chain by the cytochrome P450 monooxygenase anuE to form (8S)-annullatin E. The prenyltransferase anuH subsequently installs one isoprenyl group at the benzene ring to form (8S)-annullatin J. Enzymatic or nonenzymatic dihydro-benzofuran ring formation between the prenyl and the phenolic hydroxyl groups in (8S)-annullatin J results in two diastereomers (2S,9S)-annullatin H and compound 12. The intermediate (2S,9S)-annullatin H is then converted to (2S,9S)-annullatin D by the FAD-linked oxidoreductase anuG-catalyzed five-member lactone ring formation. The isomer 12 acts as a substrate for the short-chain dehydrogenase anuF and is oxidized to (2R)-annullatin F, which is subsequently acetylated by an acetyltransferase leading to (2R)-annullatin G formation. The remaining enzymes identified within the cluster, anuD, anuI and anuJ, seem not to be involved in annullatin biosynthesis. The polypeptide is Short-chain dehydrogenase anuB (Penicillium roqueforti (strain FM164)).